Consider the following 545-residue polypeptide: Glucans biosynthesis protein G (545 aa).

The N-terminal stretch at 1–34 is a signal peptide; it reads MVSLLRCQSFKPSSSLICSLALSAAFALSSSAFA. Residues 38–60 form a disordered region; that stretch reads KPAENKPATPVVSPPKATAQPAN.

This sequence belongs to the OpgD/OpgG family.

The protein resides in the periplasm. The protein operates within glycan metabolism; osmoregulated periplasmic glucan (OPG) biosynthesis. Its function is as follows. Involved in the biosynthesis of osmoregulated periplasmic glucans (OPGs). The protein is Glucans biosynthesis protein G of Shewanella sp. (strain MR-4).